We begin with the raw amino-acid sequence, 362 residues long: L-arginine:L-lysine amidinotransferase (362 aa).

Catalysis depends on residues Asp195 and His244. Cys346 (amidino-cysteine intermediate) is an active-site residue.

This sequence belongs to the amidinotransferase family.

The enzyme catalyses L-lysine + L-arginine = L-homoarginine + L-ornithine. The catalysed reaction is L-canavanine + L-ornithine = L-canaline + L-arginine + H(+). In terms of biological role, involved in the biosynthesis of phaseolotoxin, a nonhost-specific toxin which is a key component in the development of the halo blight disease of beans. Catalyzes the transfer of an amidino group from arginine to lysine to produce one molecule of homoarginine and one molecule of ornithine, both being precursors in the biosynthesis of phaseolotoxin. Can also use L-canavanine as an alternative amidine donor with L-ornithine as amidine acceptor. This is L-arginine:L-lysine amidinotransferase from Pseudomonas savastanoi pv. phaseolicola (Pseudomonas syringae pv. phaseolicola).